Consider the following 425-residue polypeptide: Serine--tRNA ligase (425 aa).

231–233 (TAE) lines the L-serine pocket. Residue 262-264 (RSE) coordinates ATP. Residue Glu-285 participates in L-serine binding. Position 349–352 (349–352 (EISS)) interacts with ATP. L-serine is bound at residue Ser-385.

This sequence belongs to the class-II aminoacyl-tRNA synthetase family. Type-1 seryl-tRNA synthetase subfamily. In terms of assembly, homodimer. The tRNA molecule binds across the dimer.

The protein localises to the cytoplasm. The catalysed reaction is tRNA(Ser) + L-serine + ATP = L-seryl-tRNA(Ser) + AMP + diphosphate + H(+). It catalyses the reaction tRNA(Sec) + L-serine + ATP = L-seryl-tRNA(Sec) + AMP + diphosphate + H(+). It participates in aminoacyl-tRNA biosynthesis; selenocysteinyl-tRNA(Sec) biosynthesis; L-seryl-tRNA(Sec) from L-serine and tRNA(Sec): step 1/1. Functionally, catalyzes the attachment of serine to tRNA(Ser). Is also able to aminoacylate tRNA(Sec) with serine, to form the misacylated tRNA L-seryl-tRNA(Sec), which will be further converted into selenocysteinyl-tRNA(Sec). The chain is Serine--tRNA ligase from Bacillus subtilis (strain 168).